A 180-amino-acid chain; its full sequence is ATP-dependent protease subunit HslV (180 aa).

The active site involves Thr8. Na(+)-binding residues include Ala165, Cys168, and Thr171.

This sequence belongs to the peptidase T1B family. HslV subfamily. As to quaternary structure, a double ring-shaped homohexamer of HslV is capped on each side by a ring-shaped HslU homohexamer. The assembly of the HslU/HslV complex is dependent on binding of ATP.

The protein resides in the cytoplasm. It catalyses the reaction ATP-dependent cleavage of peptide bonds with broad specificity.. Its activity is regulated as follows. Allosterically activated by HslU binding. Its function is as follows. Protease subunit of a proteasome-like degradation complex believed to be a general protein degrading machinery. The polypeptide is ATP-dependent protease subunit HslV (Staphylococcus epidermidis (strain ATCC 12228 / FDA PCI 1200)).